We begin with the raw amino-acid sequence, 321 residues long: Isoaspartyl peptidase (321 aa).

Thr179 functions as the Nucleophile in the catalytic mechanism. Substrate is bound by residues 207–210 and 230–233; these read RVGD and TGTG.

The protein belongs to the Ntn-hydrolase family. In terms of assembly, heterotetramer of two alpha and two beta chains arranged as a dimer of alpha/beta heterodimers. In terms of processing, autocleaved. Generates the alpha and beta subunits. The N-terminal residue of the beta subunit is thought to be responsible for the nucleophile hydrolase activity. Both subunits undergo further processing at their C-termini. The overexpressed alpha subunit seems to consist of residues 2-161, with an oxidized Met residue and a tightly coordinated Na(+), whereas the overexpressed beta subunit is processed to residue 315 and has 3 oxidized Met residues. Processing of the alpha subunit is inhibited by Zn(2+).

The catalysed reaction is Cleavage of a beta-linked Asp residue from the N-terminus of a polypeptide.. Degrades proteins damaged by L-isoaspartyl residue formation (also known as beta-Asp residues). Degrades L-isoaspartyl-containing di- and maybe also tripeptides. Also has L-asparaginase activity, although this may not be its principal function. Functionally, may be involved in glutathione, and possibly other peptide, transport, although these results could also be due to polar effects of disruption. The protein is Isoaspartyl peptidase (iaaA) of Escherichia coli (strain K12).